Here is a 430-residue protein sequence, read N- to C-terminus: Serine--tRNA ligase (430 aa).

237–239 contributes to the L-serine binding site; it reads TAE. Residue 268-270 coordinates ATP; the sequence is RSE. An L-serine-binding site is contributed by Glu-291. Position 355-358 (355-358) interacts with ATP; sequence EISS. Position 391 (Ser-391) interacts with L-serine.

This sequence belongs to the class-II aminoacyl-tRNA synthetase family. Type-1 seryl-tRNA synthetase subfamily. As to quaternary structure, homodimer. The tRNA molecule binds across the dimer.

It is found in the cytoplasm. The catalysed reaction is tRNA(Ser) + L-serine + ATP = L-seryl-tRNA(Ser) + AMP + diphosphate + H(+). It carries out the reaction tRNA(Sec) + L-serine + ATP = L-seryl-tRNA(Sec) + AMP + diphosphate + H(+). The protein operates within aminoacyl-tRNA biosynthesis; selenocysteinyl-tRNA(Sec) biosynthesis; L-seryl-tRNA(Sec) from L-serine and tRNA(Sec): step 1/1. Its function is as follows. Catalyzes the attachment of serine to tRNA(Ser). Is also able to aminoacylate tRNA(Sec) with serine, to form the misacylated tRNA L-seryl-tRNA(Sec), which will be further converted into selenocysteinyl-tRNA(Sec). The protein is Serine--tRNA ligase of Salmonella enteritidis PT4 (strain P125109).